Reading from the N-terminus, the 389-residue chain is Pyruvate dehydrogenase E1 component subunit alpha, somatic form, mitochondrial (389 aa).

Residues 1–28 constitute a mitochondrion transit peptide; the sequence is GKMLAAVSRVLSGVAQKPASRVLVASRT. Position 62 is an N6-acetyllysine; alternate (lysine 62). Lysine 62 is subject to N6-succinyllysine; alternate. Residues histidine 91, tyrosine 117, arginine 118, alanine 156, glycine 164, valine 166, aspartate 195, glycine 196, alanine 197, asparagine 224, and tyrosine 226 each contribute to the pyruvate site. Thiamine diphosphate-binding residues include tyrosine 117 and arginine 118. Thiamine diphosphate is bound by residues glycine 164, valine 166, aspartate 195, glycine 196, alanine 197, and asparagine 224. Aspartate 195 is a Mg(2+) binding site. Mg(2+)-binding residues include asparagine 224 and tyrosine 226. At serine 231 the chain carries Phosphoserine; by PDK1. Lysine 243 bears the N6-acetyllysine; alternate mark. Lysine 243 bears the N6-succinyllysine; alternate mark. At lysine 276 the chain carries N6-succinyllysine. Histidine 291 is a binding site for thiamine diphosphate. Residue serine 292 is modified to Phosphoserine; by PDK1, PDK2, PDK3 and PDK4. Serine 294 bears the Phosphoserine mark. At serine 299 the chain carries Phosphoserine; by PDK1, PDK2, PDK3 and PDK4. Tyrosine 300 is subject to Phosphotyrosine. Lysine 312 is modified (N6-acetyllysine; alternate). The residue at position 312 (lysine 312) is an N6-succinyllysine; alternate. Lysine 320 and lysine 335 each carry N6-acetyllysine. Lysine 384 carries the post-translational modification N6-succinyllysine.

Heterotetramer of two PDHA1 and two PDHB subunits. The heterotetramer interacts with DLAT, and is part of the multimeric pyruvate dehydrogenase complex that contains multiple copies of pyruvate dehydrogenase (E1), dihydrolipoamide acetyltransferase (DLAT, E2) and lipoamide dehydrogenase (DLD, E3). These subunits are bound to an inner core composed of about 48 DLAT and 12 PDHX molecules. The cofactor is thiamine diphosphate. Mg(2+) is required as a cofactor. In terms of processing, phosphorylation at Ser-231, Ser-292 and Ser-299 by PDK family kinases inactivates the enzyme; for this phosphorylation at a single site is sufficient. Phosphorylation at Ser-292 interferes with access to active site, and thereby inactivates the enzyme. Dephosphorylation at all three sites, i.e. at Ser-231, Ser-292 and Ser-299, is required for reactivation. Acetylation alters the phosphorylation pattern. Deacetylated by SIRT3.

Its subcellular location is the mitochondrion matrix. It carries out the reaction N(6)-[(R)-lipoyl]-L-lysyl-[protein] + pyruvate + H(+) = N(6)-[(R)-S(8)-acetyldihydrolipoyl]-L-lysyl-[protein] + CO2. With respect to regulation, pyruvate dehydrogenase activity is inhibited by phosphorylation of PDHA1; it is reactivated by dephosphorylation. The pyruvate dehydrogenase complex catalyzes the overall conversion of pyruvate to acetyl-CoA and CO(2), and thereby links the glycolytic pathway to the tricarboxylic cycle. The protein is Pyruvate dehydrogenase E1 component subunit alpha, somatic form, mitochondrial (PDHA1) of Sus scrofa (Pig).